Consider the following 343-residue polypeptide: Thymidine kinase (343 aa).

27-34 (GAYGIGKS) contacts ATP. Catalysis depends on Glu56, which acts as the Proton acceptor. Residues Tyr74 and Gln98 each coordinate substrate. Arg188 serves as a coordination point for ATP. Arg194 is a substrate binding site.

It belongs to the herpesviridae thymidine kinase family. As to quaternary structure, homodimer.

It carries out the reaction thymidine + ATP = dTMP + ADP + H(+). Its function is as follows. Catalyzes the transfer of the gamma-phospho group of ATP to thymidine to generate dTMP in the salvage pathway of pyrimidine synthesis. The dTMP serves as a substrate for DNA polymerase during viral DNA replication. Allows the virus to be reactivated and to grow in non-proliferative cells lacking a high concentration of phosphorylated nucleic acid precursors. The polypeptide is Thymidine kinase (Felidae (cat family)).